We begin with the raw amino-acid sequence, 474 residues long: Aspartyl/glutamyl-tRNA(Asn/Gln) amidotransferase subunit B (474 aa).

Belongs to the GatB/GatE family. GatB subfamily. Heterotrimer of A, B and C subunits.

The catalysed reaction is L-glutamyl-tRNA(Gln) + L-glutamine + ATP + H2O = L-glutaminyl-tRNA(Gln) + L-glutamate + ADP + phosphate + H(+). The enzyme catalyses L-aspartyl-tRNA(Asn) + L-glutamine + ATP + H2O = L-asparaginyl-tRNA(Asn) + L-glutamate + ADP + phosphate + 2 H(+). Allows the formation of correctly charged Asn-tRNA(Asn) or Gln-tRNA(Gln) through the transamidation of misacylated Asp-tRNA(Asn) or Glu-tRNA(Gln) in organisms which lack either or both of asparaginyl-tRNA or glutaminyl-tRNA synthetases. The reaction takes place in the presence of glutamine and ATP through an activated phospho-Asp-tRNA(Asn) or phospho-Glu-tRNA(Gln). This chain is Aspartyl/glutamyl-tRNA(Asn/Gln) amidotransferase subunit B, found in Campylobacter curvus (strain 525.92).